A 633-amino-acid chain; its full sequence is Pentatricopeptide repeat-containing protein At3g24000, mitochondrial (633 aa).

The N-terminal 63 residues, 1–63, are a transit peptide targeting the mitochondrion; sequence MALRFPPRLL…SYIPADRRFY (63 aa). PPR repeat units lie at residues 94–124, 125–159, 160–194, 195–225, 226–260, 261–295, 296–326, 327–361, 362–396, and 397–431; these read DIVMGNTLLNMYAKCGSLEEARKVFEKMPQR, DFVTWTTLISGYSQHDRPCDALLFFNQMLRFGYSP, NEFTLSSVIKAAAAERRGCCGHQLHGFCVKCGFDS, NVHVGSALLDLYTRYGLMDDAQLVFDALESR, NDVSWNALIAGHARRSGTEKALELFQGMLRDGFRP, SHFSYASLFGACSSTGFLEQGKWVHAYMIKSGEKL, VAFAGNTLLDMYAKSGSIHDARKIFDRLAKR, DVVSWNSLLTAYAQHGFGKEAVWWFEEMRRVGIRP, NEISFLSVLTACSHSGLLDEGWHYYELMKKDGIVP, and EAWHYVTVVDLLGRAGDLNRALRFIEEMPIEPTAA. Positions 432 to 507 are type E motif; sequence IWKALLNACR…EPACSWVEIE (76 aa). Residues 508 to 538 form a type E(+) motif region; that stretch reads NAIHMFVANDERHPQREEIARKWEEVLAKIK. Residues 539 to 633 form a type DYW motif region; that stretch reads ELGYVPDTSH…DGNCSCKDYW (95 aa).

It belongs to the PPR family. PCMP-H subfamily.

The protein localises to the mitochondrion. The chain is Pentatricopeptide repeat-containing protein At3g24000, mitochondrial (PCMP-H87) from Arabidopsis thaliana (Mouse-ear cress).